Consider the following 373-residue polypeptide: UDP-3-O-acylglucosamine N-acyltransferase 2 (373 aa).

Residue His257 is the Proton acceptor of the active site. Residues Asp346–Ser373 form a disordered region. The segment covering Ala350–Ala362 has biased composition (low complexity).

This sequence belongs to the transferase hexapeptide repeat family. LpxD subfamily. As to quaternary structure, homotrimer.

It catalyses the reaction a UDP-3-O-[(3R)-3-hydroxyacyl]-alpha-D-glucosamine + a (3R)-hydroxyacyl-[ACP] = a UDP-2-N,3-O-bis[(3R)-3-hydroxyacyl]-alpha-D-glucosamine + holo-[ACP] + H(+). Its pathway is bacterial outer membrane biogenesis; LPS lipid A biosynthesis. Its function is as follows. Catalyzes the N-acylation of UDP-3-O-acylglucosamine using 3-hydroxyacyl-ACP as the acyl donor. Is involved in the biosynthesis of lipid A, a phosphorylated glycolipid that anchors the lipopolysaccharide to the outer membrane of the cell. The polypeptide is UDP-3-O-acylglucosamine N-acyltransferase 2 (Rhodopseudomonas palustris (strain BisB18)).